The primary structure comprises 247 residues: NAD(P)H-quinone oxidoreductase subunit K, chloroplastic (247 aa).

[4Fe-4S] cluster-binding residues include C61, C62, C126, and C157.

The protein belongs to the complex I 20 kDa subunit family. In terms of assembly, NDH is composed of at least 16 different subunits, 5 of which are encoded in the nucleus. [4Fe-4S] cluster is required as a cofactor.

It is found in the plastid. Its subcellular location is the chloroplast thylakoid membrane. It catalyses the reaction a plastoquinone + NADH + (n+1) H(+)(in) = a plastoquinol + NAD(+) + n H(+)(out). The enzyme catalyses a plastoquinone + NADPH + (n+1) H(+)(in) = a plastoquinol + NADP(+) + n H(+)(out). NDH shuttles electrons from NAD(P)H:plastoquinone, via FMN and iron-sulfur (Fe-S) centers, to quinones in the photosynthetic chain and possibly in a chloroplast respiratory chain. The immediate electron acceptor for the enzyme in this species is believed to be plastoquinone. Couples the redox reaction to proton translocation, and thus conserves the redox energy in a proton gradient. The polypeptide is NAD(P)H-quinone oxidoreductase subunit K, chloroplastic (Anthoceros angustus (Hornwort)).